Consider the following 399-residue polypeptide: Chorismate synthase (399 aa).

NADP(+) is bound by residues Arg-40 and Arg-46. FMN contacts are provided by residues Arg-135 to Ser-137, Gln-256 to Ala-257, Gly-301, Lys-316 to Thr-320, and Arg-342.

It belongs to the chorismate synthase family. Homotetramer. FMNH2 is required as a cofactor.

The catalysed reaction is 5-O-(1-carboxyvinyl)-3-phosphoshikimate = chorismate + phosphate. Its pathway is metabolic intermediate biosynthesis; chorismate biosynthesis; chorismate from D-erythrose 4-phosphate and phosphoenolpyruvate: step 7/7. In terms of biological role, catalyzes the anti-1,4-elimination of the C-3 phosphate and the C-6 proR hydrogen from 5-enolpyruvylshikimate-3-phosphate (EPSP) to yield chorismate, which is the branch point compound that serves as the starting substrate for the three terminal pathways of aromatic amino acid biosynthesis. This reaction introduces a second double bond into the aromatic ring system. The sequence is that of Chorismate synthase from Pseudarthrobacter chlorophenolicus (strain ATCC 700700 / DSM 12829 / CIP 107037 / JCM 12360 / KCTC 9906 / NCIMB 13794 / A6) (Arthrobacter chlorophenolicus).